Reading from the N-terminus, the 121-residue chain is Large ribosomal subunit protein bL12 (121 aa).

Belongs to the bacterial ribosomal protein bL12 family. In terms of assembly, homodimer. Part of the ribosomal stalk of the 50S ribosomal subunit. Forms a multimeric L10(L12)X complex, where L10 forms an elongated spine to which 2 to 4 L12 dimers bind in a sequential fashion. Binds GTP-bound translation factors.

In terms of biological role, forms part of the ribosomal stalk which helps the ribosome interact with GTP-bound translation factors. Is thus essential for accurate translation. The chain is Large ribosomal subunit protein bL12 from Shewanella baltica (strain OS223).